A 440-amino-acid polypeptide reads, in one-letter code: tRNA(Ile)-lysidine synthase (440 aa).

31-36 lines the ATP pocket; the sequence is SGGADS.

This sequence belongs to the tRNA(Ile)-lysidine synthase family.

Its subcellular location is the cytoplasm. The enzyme catalyses cytidine(34) in tRNA(Ile2) + L-lysine + ATP = lysidine(34) in tRNA(Ile2) + AMP + diphosphate + H(+). Functionally, ligates lysine onto the cytidine present at position 34 of the AUA codon-specific tRNA(Ile) that contains the anticodon CAU, in an ATP-dependent manner. Cytidine is converted to lysidine, thus changing the amino acid specificity of the tRNA from methionine to isoleucine. The polypeptide is tRNA(Ile)-lysidine synthase (Borreliella afzelii (strain PKo) (Borrelia afzelii)).